A 762-amino-acid chain; its full sequence is Xaa-Pro dipeptidyl-peptidase (762 aa).

Active-site charge relay system residues include Ser-349, Asp-469, and His-499.

It belongs to the peptidase S15 family. As to quaternary structure, homodimer.

The protein resides in the cytoplasm. The enzyme catalyses Hydrolyzes Xaa-Pro-|- bonds to release unblocked, N-terminal dipeptides from substrates including Ala-Pro-|-p-nitroanilide and (sequentially) Tyr-Pro-|-Phe-Pro-|-Gly-Pro-|-Ile.. Functionally, removes N-terminal dipeptides sequentially from polypeptides having unsubstituted N-termini provided that the penultimate residue is proline. The chain is Xaa-Pro dipeptidyl-peptidase from Streptococcus sanguinis (strain SK36).